A 206-amino-acid polypeptide reads, in one-letter code: Ribosome maturation factor RimM (206 aa).

Positions 113 to 206 (DDEYYWVDLI…RIDSNWPTEL (94 aa)) constitute a PRC barrel domain.

This sequence belongs to the RimM family. In terms of assembly, binds ribosomal protein uS19.

It is found in the cytoplasm. Its function is as follows. An accessory protein needed during the final step in the assembly of 30S ribosomal subunit, possibly for assembly of the head region. Essential for efficient processing of 16S rRNA. May be needed both before and after RbfA during the maturation of 16S rRNA. It has affinity for free ribosomal 30S subunits but not for 70S ribosomes. The protein is Ribosome maturation factor RimM of Bordetella petrii (strain ATCC BAA-461 / DSM 12804 / CCUG 43448).